A 104-amino-acid chain; its full sequence is Large ribosomal subunit protein uL24 (104 aa).

This sequence belongs to the universal ribosomal protein uL24 family. In terms of assembly, part of the 50S ribosomal subunit.

In terms of biological role, one of two assembly initiator proteins, it binds directly to the 5'-end of the 23S rRNA, where it nucleates assembly of the 50S subunit. Its function is as follows. One of the proteins that surrounds the polypeptide exit tunnel on the outside of the subunit. This is Large ribosomal subunit protein uL24 from Dichelobacter nodosus (strain VCS1703A).